A 558-amino-acid chain; its full sequence is Germacrene A synthase short form (558 aa).

Residues aspartate 311, aspartate 315, aspartate 455, threonine 459, and glutamate 463 each coordinate Mg(2+). A DDXXD motif motif is present at residues 311–315 (DDTYD).

The protein belongs to the terpene synthase family. It depends on Mg(2+) as a cofactor. As to expression, expressed in roots and in green and etiolated seedlings.

It carries out the reaction (2E,6E)-farnesyl diphosphate = (+)-(R)-germacrene A + diphosphate. Its pathway is secondary metabolite biosynthesis; terpenoid biosynthesis. In terms of biological role, involved in sesquiterpene lactone biosynthesis. Produces exclusively (+)-germacrene A. In Cichorium intybus (Chicory), this protein is Germacrene A synthase short form.